Consider the following 64-residue polypeptide: DNA gyrase inhibitor YacG (64 aa).

Positions 9, 12, 28, and 32 each coordinate Zn(2+). Residues 45 to 64 (KRIPSAGDLSDSDDWSEQQP) are disordered. Over residues 54 to 64 (SDSDDWSEQQP) the composition is skewed to acidic residues.

This sequence belongs to the DNA gyrase inhibitor YacG family. In terms of assembly, interacts with GyrB. It depends on Zn(2+) as a cofactor.

Its function is as follows. Inhibits all the catalytic activities of DNA gyrase by preventing its interaction with DNA. Acts by binding directly to the C-terminal domain of GyrB, which probably disrupts DNA binding by the gyrase. The chain is DNA gyrase inhibitor YacG from Klebsiella pneumoniae subsp. pneumoniae (strain ATCC 700721 / MGH 78578).